A 336-amino-acid chain; its full sequence is MTTFLAGGTGTPKLLAGARRVFDPAETTVVGNTGDDVALGGLLVCPDLDTVLFEGGGVLDRETWWGIADDGSTTHDYLTDLAAAADIDPDTPRYLPDDAQTAGRDIARWRRFSAASEFMFIGDRDRAVHTLRAGLLDEGHTLTEVTRRLADAFDLSVDLVPMSNDPVATIVQTPDGEQHFQTFWVAEHGDPTVEDVEFRGGERATAAQPAIEAIRDGPVVVGPSNPVTSIGPMLALDGIADALRDAQVVAVSPFVEDEVFSGPAAKLMAAVGHDPSTAGVADAYDFADAFVLDTADSTDLDRPVVRTDTSLDTEADAERVARACRDALVAASGEVT.

Aspartate 49 contributes to the 7,8-didemethyl-8-hydroxy-5-deazariboflavin binding site.

It belongs to the CofD family. Homodimer. Requires Mg(2+) as cofactor.

It catalyses the reaction (2S)-lactyl-2-diphospho-5'-guanosine + 7,8-didemethyl-8-hydroxy-5-deazariboflavin = oxidized coenzyme F420-0 + GMP + H(+). Its pathway is cofactor biosynthesis; coenzyme F420 biosynthesis. In terms of biological role, catalyzes the transfer of the 2-phospholactate moiety from (2S)-lactyl-2-diphospho-5'-guanosine to 7,8-didemethyl-8-hydroxy-5-deazariboflavin (FO) with the formation of oxidized coenzyme F420-0 and GMP. This chain is 2-phospho-L-lactate transferase, found in Halobacterium salinarum (strain ATCC 700922 / JCM 11081 / NRC-1) (Halobacterium halobium).